The primary structure comprises 265 residues: Small ribosomal subunit protein uS2 (265 aa).

Belongs to the universal ribosomal protein uS2 family.

This Aliarcobacter butzleri (strain RM4018) (Arcobacter butzleri) protein is Small ribosomal subunit protein uS2.